Consider the following 130-residue polypeptide: Lysozyme C (130 aa).

Positions 1-130 constitute a C-type lysozyme domain; sequence KIYERCELAR…LTPYIRGCGV (130 aa). Disulfide bonds link C6-C128, C30-C116, C65-C81, and C77-C95. Active-site residues include E35 and D53.

This sequence belongs to the glycosyl hydrolase 22 family. Monomer.

The protein resides in the secreted. It carries out the reaction Hydrolysis of (1-&gt;4)-beta-linkages between N-acetylmuramic acid and N-acetyl-D-glucosamine residues in a peptidoglycan and between N-acetyl-D-glucosamine residues in chitodextrins.. Its function is as follows. Lysozymes have primarily a bacteriolytic function; those in tissues and body fluids are associated with the monocyte-macrophage system and enhance the activity of immunoagents. This is Lysozyme C (LYZ) from Oryctolagus cuniculus (Rabbit).